The chain runs to 483 residues: ATP-dependent RNA helicase DDX25 (483 aa).

Positions 97-125 (KSFEELHLKNELLRGIYAMGFNRPSKIQE) match the Q motif motif. Positions 130–300 (MMLADPPQNL…ERIVPDPNII (171 aa)) constitute a Helicase ATP-binding domain. 143-150 (SQSGTGKT) provides a ligand contact to ATP. The DEAD box motif lies at 247–250 (DEAD). Positions 311–478 (NIQQFYDQCE…KLNSMDMDEM (168 aa)) constitute a Helicase C-terminal domain.

Belongs to the DEAD box helicase family. As to expression, an mRNA component of germ plasm. Localizes to the granulo-fibrillar material (GFM) of the mitochondrial cloud in stage I oocytes. Associated, at a low level, with the periphery of mature germinal granules in later stage oocytes. Localizes to the vegetal cortex in stage II oocytes and segregates with germ plasm during early embryogenesis. In adults, expression is restricted to the ovary and, at a lower level, to spermatogonia, spermatocytes and spermatids of the testis.

It is found in the cytoplasm. The protein resides in the nucleus. The enzyme catalyses ATP + H2O = ADP + phosphate + H(+). Its function is as follows. ATP-dependent RNA helicase. This Xenopus laevis (African clawed frog) protein is ATP-dependent RNA helicase DDX25.